The chain runs to 637 residues: Acetolactate synthase 2, chloroplastic (637 aa).

Residues 1–73 (MASFSFFGTI…SSKYAPNVPR (73 aa)) constitute a chloroplast transit peptide. Residues 35–69 (RRATRVSVSANSKKDQDRTASRRENPSTFSSKYAP) are disordered. Residues 46–59 (SKKDQDRTASRREN) are compositionally biased toward basic and acidic residues. E120 lines the thiamine diphosphate pocket. FAD contacts are provided by residues R222, 329–350 (HGTVYANYAVEYSDLLLAFGVR), and 372–391 (DIDSTEIGKNKTPHVSVCCD). Positions 462–542 (QHQMWAAQFY…VKVLLINNQH (81 aa)) are thiamine pyrophosphate binding. D513 and N540 together coordinate Mg(2+).

Belongs to the TPP enzyme family. The cofactor is Mg(2+). It depends on thiamine diphosphate as a cofactor.

The protein localises to the plastid. It is found in the chloroplast. The enzyme catalyses 2 pyruvate + H(+) = (2S)-2-acetolactate + CO2. It participates in amino-acid biosynthesis; L-isoleucine biosynthesis; L-isoleucine from 2-oxobutanoate: step 1/4. The protein operates within amino-acid biosynthesis; L-valine biosynthesis; L-valine from pyruvate: step 1/4. This is Acetolactate synthase 2, chloroplastic from Brassica napus (Rape).